A 332-amino-acid chain; its full sequence is 5-dehydro-2-deoxygluconokinase 2 (332 aa).

The protein belongs to the carbohydrate kinase PfkB family.

The enzyme catalyses 5-dehydro-2-deoxy-D-gluconate + ATP = 6-phospho-5-dehydro-2-deoxy-D-gluconate + ADP + H(+). It participates in polyol metabolism; myo-inositol degradation into acetyl-CoA; acetyl-CoA from myo-inositol: step 5/7. Catalyzes the phosphorylation of 5-dehydro-2-deoxy-D-gluconate (2-deoxy-5-keto-D-gluconate or DKG) to 6-phospho-5-dehydro-2-deoxy-D-gluconate (DKGP). The protein is 5-dehydro-2-deoxygluconokinase 2 of Bacillus cereus (strain ZK / E33L).